The sequence spans 176 residues: Adenine phosphoribosyltransferase (176 aa).

It belongs to the purine/pyrimidine phosphoribosyltransferase family. In terms of assembly, homodimer.

The protein resides in the cytoplasm. The enzyme catalyses AMP + diphosphate = 5-phospho-alpha-D-ribose 1-diphosphate + adenine. Its pathway is purine metabolism; AMP biosynthesis via salvage pathway; AMP from adenine: step 1/1. Its function is as follows. Catalyzes a salvage reaction resulting in the formation of AMP, that is energically less costly than de novo synthesis. The chain is Adenine phosphoribosyltransferase from Roseobacter denitrificans (strain ATCC 33942 / OCh 114) (Erythrobacter sp. (strain OCh 114)).